A 324-amino-acid chain; its full sequence is Alkanal monooxygenase beta chain (324 aa).

The protein belongs to the bacterial luciferase oxidoreductase family. In terms of assembly, heterodimer of an alpha and a beta chain.

It carries out the reaction a long-chain fatty aldehyde + FMNH2 + O2 = a long-chain fatty acid + hnu + FMN + H2O + 2 H(+). Its function is as follows. Light-emitting reaction in luminous bacteria. The specific role of the beta subunit is unknown, but it is absolutely required for bioluminescence activity. The chain is Alkanal monooxygenase beta chain (luxB) from Photorhabdus luminescens (Xenorhabdus luminescens).